The sequence spans 426 residues: 5-methylthioadenosine/S-adenosylhomocysteine deaminase (426 aa).

Positions 60 and 62 each coordinate Zn(2+). 2 residues coordinate substrate: Glu-89 and His-179. His-206 contributes to the Zn(2+) binding site. Positions 209 and 294 each coordinate substrate. Asp-294 contributes to the Zn(2+) binding site.

Belongs to the metallo-dependent hydrolases superfamily. MTA/SAH deaminase family. Zn(2+) is required as a cofactor.

The enzyme catalyses S-adenosyl-L-homocysteine + H2O + H(+) = S-inosyl-L-homocysteine + NH4(+). The catalysed reaction is S-methyl-5'-thioadenosine + H2O + H(+) = S-methyl-5'-thioinosine + NH4(+). In terms of biological role, catalyzes the deamination of 5-methylthioadenosine and S-adenosyl-L-homocysteine into 5-methylthioinosine and S-inosyl-L-homocysteine, respectively. Is also able to deaminate adenosine. In Dictyoglomus turgidum (strain DSM 6724 / Z-1310), this protein is 5-methylthioadenosine/S-adenosylhomocysteine deaminase.